The chain runs to 179 residues: Large ribosomal subunit protein uL6 (179 aa).

The protein belongs to the universal ribosomal protein uL6 family. In terms of assembly, part of the 50S ribosomal subunit.

Its function is as follows. This protein binds to the 23S rRNA, and is important in its secondary structure. It is located near the subunit interface in the base of the L7/L12 stalk, and near the tRNA binding site of the peptidyltransferase center. In Spiroplasma kunkelii, this protein is Large ribosomal subunit protein uL6.